The sequence spans 258 residues: MHTTLKTRTVGSGPNFVLLHGWGVNSGVWQPIAKQLEQHFSVTYVDLPGFGENNQIMPKPYDLKNLAECVANVLPENSVLAGWSLGGLVAQHVALLEPTNVKQLILIATSPKFQKGNDWAGIDPNILQAFSQQLVKNLSKTIERFLAIQAMGSDSAKTDIRKIKNSIEASPQADIAALTAGLDILEHVDLRDQIAALKMPIHWMLGRLDSLVPVKLQGYVQRSLAKNHSVTIFPHASHAPFISHTEDFLIDLMENTLR.

Residues W22, 84-85 (SL), and 145-149 (FLAIQ) each bind substrate. S84 serves as the catalytic Nucleophile. Residues D209 and H238 contribute to the active site. H238 contributes to the substrate binding site.

Belongs to the AB hydrolase superfamily. Carboxylesterase BioH family. In terms of assembly, monomer.

The protein localises to the cytoplasm. It catalyses the reaction 6-carboxyhexanoyl-[ACP] methyl ester + H2O = 6-carboxyhexanoyl-[ACP] + methanol + H(+). It participates in cofactor biosynthesis; biotin biosynthesis. Its function is as follows. The physiological role of BioH is to remove the methyl group introduced by BioC when the pimeloyl moiety is complete. It allows to synthesize pimeloyl-ACP via the fatty acid synthetic pathway through the hydrolysis of the ester bonds of pimeloyl-ACP esters. The protein is Pimeloyl-[acyl-carrier protein] methyl ester esterase of Pseudoalteromonas atlantica (strain T6c / ATCC BAA-1087).